A 358-amino-acid chain; its full sequence is Glyoxylate/succinic semialdehyde reductase 2, chloroplastic (358 aa).

The transit peptide at 1–44 (MPLVSLSFASSSSKAMALCSICPRIPLRFRPKPISPFLSKPQIC) directs the protein to the chloroplast. Residues 70-84 (GFLG…MAQN) and threonine 161 each bind NADP(+). Lysine 236 is an active-site residue. Residue lysine 304 participates in NADP(+) binding.

The protein belongs to the HIBADH-related family. NP60 subfamily.

The protein localises to the plastid. It localises to the chloroplast stroma. It catalyses the reaction glycolate + NADP(+) = glyoxylate + NADPH + H(+). It carries out the reaction 4-hydroxybutanoate + NADP(+) = succinate semialdehyde + NADPH + H(+). With respect to regulation, the ratio of NADPH/NADP(+) may regulate enzymatic activity. In terms of biological role, catalyzes the NADPH-dependent reduction of glyoxylate to glycolate as well as succinic semialdehyde (SSA) to gamma-hydroxybutyrate in vitro. May function in redox homeostasis and play a role in oxidative stress tolerance by detoxifying glyoxylate and SSA generated in glycolate metabolism and GABA metabolism, respectively. In Arabidopsis thaliana (Mouse-ear cress), this protein is Glyoxylate/succinic semialdehyde reductase 2, chloroplastic (GLYR2).